We begin with the raw amino-acid sequence, 420 residues long: Histidine--tRNA ligase (420 aa).

The protein belongs to the class-II aminoacyl-tRNA synthetase family. In terms of assembly, homodimer.

The protein localises to the cytoplasm. The enzyme catalyses tRNA(His) + L-histidine + ATP = L-histidyl-tRNA(His) + AMP + diphosphate + H(+). The chain is Histidine--tRNA ligase (hisS) from Mycoplasmopsis pulmonis (strain UAB CTIP) (Mycoplasma pulmonis).